The primary structure comprises 72 residues: uncharacterized protein (72 aa).

Topologically, residues 1 to 12 (MSKHKHEWTESV) are cytoplasmic. The helical transmembrane segment at 13 to 32 (ANSGPASILSYCASSILMTV) threads the bilayer. Residues 33-46 (TNKFVVNLDNFNMN) are Lumenal-facing. The chain crosses the membrane as a helical span at residues 47-69 (FVMLFVQSLVCTVTLCILRIVGV). At 70–72 (ANF) the chain is on the cytoplasmic side.

It belongs to the TPT transporter family. SLC35D subfamily.

It localises to the membrane. This is an uncharacterized protein from Saccharomyces cerevisiae (strain RM11-1a) (Baker's yeast).